Here is a 189-residue protein sequence, read N- to C-terminus: Molybdopterin synthase catalytic subunit (189 aa).

Serine 20 is modified (phosphoserine). Residues 143-144 (HR), lysine 159, and 166-168 (KKE) contribute to the substrate site.

It belongs to the MoaE family. MOCS2B subfamily. Heterotetramer; composed of 2 small (MOCS2A) and 2 large (MOCS2B) subunits.

Its subcellular location is the cytoplasm. The protein resides in the cytosol. The catalysed reaction is 2 [molybdopterin-synthase sulfur-carrier protein]-C-terminal-Gly-aminoethanethioate + cyclic pyranopterin phosphate + H2O = molybdopterin + 2 [molybdopterin-synthase sulfur-carrier protein]-C-terminal Gly-Gly + 2 H(+). The protein operates within cofactor biosynthesis; molybdopterin biosynthesis. Catalytic subunit of the molybdopterin synthase complex, a complex that catalyzes the conversion of precursor Z into molybdopterin. Acts by mediating the incorporation of 2 sulfur atoms from thiocarboxylated MOCS2A into precursor Z to generate a dithiolene group. The sequence is that of Molybdopterin synthase catalytic subunit from Bos taurus (Bovine).